The primary structure comprises 31 residues: Cytochrome b6-f complex subunit 6 (31 aa).

The helical transmembrane segment at 4–24 (ITSYFGFLLAALTITSALLIG) threads the bilayer.

Belongs to the PetL family. As to quaternary structure, the 4 large subunits of the cytochrome b6-f complex are cytochrome b6, subunit IV (17 kDa polypeptide, PetD), cytochrome f and the Rieske protein, while the 4 small subunits are PetG, PetL, PetM and PetN. The complex functions as a dimer.

The protein localises to the plastid. The protein resides in the chloroplast thylakoid membrane. In terms of biological role, component of the cytochrome b6-f complex, which mediates electron transfer between photosystem II (PSII) and photosystem I (PSI), cyclic electron flow around PSI, and state transitions. PetL is important for photoautotrophic growth as well as for electron transfer efficiency and stability of the cytochrome b6-f complex. This is Cytochrome b6-f complex subunit 6 from Magnolia grandiflora (Southern magnolia).